The primary structure comprises 303 residues: Bifunctional protein FolD (303 aa).

NADP(+) is bound by residues 168–170, T197, and V238; that span reads GRS.

It belongs to the tetrahydrofolate dehydrogenase/cyclohydrolase family. In terms of assembly, homodimer.

It carries out the reaction (6R)-5,10-methylene-5,6,7,8-tetrahydrofolate + NADP(+) = (6R)-5,10-methenyltetrahydrofolate + NADPH. The catalysed reaction is (6R)-5,10-methenyltetrahydrofolate + H2O = (6R)-10-formyltetrahydrofolate + H(+). It participates in one-carbon metabolism; tetrahydrofolate interconversion. Catalyzes the oxidation of 5,10-methylenetetrahydrofolate to 5,10-methenyltetrahydrofolate and then the hydrolysis of 5,10-methenyltetrahydrofolate to 10-formyltetrahydrofolate. In Desulfosudis oleivorans (strain DSM 6200 / JCM 39069 / Hxd3) (Desulfococcus oleovorans), this protein is Bifunctional protein FolD.